We begin with the raw amino-acid sequence, 327 residues long: L-serine dehydratase/L-threonine deaminase (327 aa).

An N6-(pyridoxal phosphate)lysine modification is found at Lys-41.

It belongs to the serine/threonine dehydratase family. Homodimer. It depends on pyridoxal 5'-phosphate as a cofactor.

The protein localises to the cytoplasm. It catalyses the reaction L-serine = pyruvate + NH4(+). The enzyme catalyses L-threonine = 2-oxobutanoate + NH4(+). Its pathway is carbohydrate biosynthesis; gluconeogenesis. Catalyzes the pyridoxal-phosphate-dependent dehydrative deamination of L-threonine and L-serine to ammonia and alpha-ketobutyrate and pyruvate, respectively. The protein is L-serine dehydratase/L-threonine deaminase (SDS) of Bos taurus (Bovine).